We begin with the raw amino-acid sequence, 109 residues long: Nucleoid-associated protein plu3840 (109 aa).

Disordered regions lie at residues 1 to 23 and 89 to 109; these read MFGK…KMQK and KEKM…KMPF.

The protein belongs to the YbaB/EbfC family. Homodimer.

The protein localises to the cytoplasm. It is found in the nucleoid. In terms of biological role, binds to DNA and alters its conformation. May be involved in regulation of gene expression, nucleoid organization and DNA protection. This Photorhabdus laumondii subsp. laumondii (strain DSM 15139 / CIP 105565 / TT01) (Photorhabdus luminescens subsp. laumondii) protein is Nucleoid-associated protein plu3840.